The primary structure comprises 365 residues: DNA polymerase IV (365 aa).

A UmuC domain is found at 7–188 (IIHIDMDAFY…LPVNKFFGVG (182 aa)). Positions 11 and 106 each coordinate Mg(2+). The active site involves E107.

It belongs to the DNA polymerase type-Y family. In terms of assembly, monomer. The cofactor is Mg(2+).

It is found in the cytoplasm. It catalyses the reaction DNA(n) + a 2'-deoxyribonucleoside 5'-triphosphate = DNA(n+1) + diphosphate. In terms of biological role, poorly processive, error-prone DNA polymerase involved in untargeted mutagenesis. Copies undamaged DNA at stalled replication forks, which arise in vivo from mismatched or misaligned primer ends. These misaligned primers can be extended by PolIV. Exhibits no 3'-5' exonuclease (proofreading) activity. May be involved in translesional synthesis, in conjunction with the beta clamp from PolIII. This is DNA polymerase IV from Clostridioides difficile (strain 630) (Peptoclostridium difficile).